Here is a 359-residue protein sequence, read N- to C-terminus: Mitochondrial glutathione transporter SLC25A39 (359 aa).

Topologically, residues 1–14 (MADQDPAGISPLQQ) are mitochondrial intermembrane. 3 Solcar repeats span residues 9-151 (ISPL…LKAF), 159-243 (SDLY…VKSW), and 253-347 (TSVG…GKSF). The chain crosses the membrane as a helical span at residues 15-35 (MVASGTGAVVTSLFMTPLDVV). Residues 36–121 (KVRLQSQRPS…VKIVRHEGTR (86 aa)) lie on the Mitochondrial matrix side of the membrane. Cysteine 74, cysteine 78, cysteine 88, and cysteine 94 together coordinate [2Fe-2S] cluster. The helical transmembrane segment at 122–142 (TLWSGLPATLVMTVPATAIYF) threads the bilayer. Residues 143 to 160 (TAYDQLKAFLCGRALTSD) are Mitochondrial intermembrane-facing. Residues 161–181 (LYAPMVAGALARLGTVTVISP) form a helical membrane-spanning segment. The Mitochondrial matrix segment spans residues 182-214 (LELMRTKLQAQHVSYRELGACVRTAVAQGGWRS). The helical transmembrane segment at 215 to 235 (LWLGWGPTALRDVPFSALYWF) threads the bilayer. Residues 236–258 (NYELVKSWLNGFRPKDQTSVGMS) are Mitochondrial intermembrane-facing. Residues 259–279 (FVAGGISGTVAAVLTLPFDVV) traverse the membrane as a helical segment. At 280-317 (KTQRQVALGAMEAVRVNPLHVDSTWLLLRRIRAESGTK) the chain is on the mitochondrial matrix side. A helical transmembrane segment spans residues 318 to 338 (GLFAGFLPRIIKAAPSCAIMI). The Mitochondrial intermembrane portion of the chain corresponds to 339-359 (STYEFGKSFFQRLNQDRLLGG).

This sequence belongs to the mitochondrial carrier (TC 2.A.29) family. Cleaved and degraded by AFG3L2; degradation by AFG3L2 is regulated by the ability of SLC25A39 to bind iron-sulfur. In absence of mitochondrial glutathione, SLC25A39 binds iron-sulfur, preventing cleavage and degradation by AFG3L2. The presence of mitochondrial glutathione prevents iron-sulfur-binding to SLC25A39, promoting cleavage and degradation by AFG3L2. In terms of tissue distribution, expressed in many tissues. Abundant in testis and kidney.

The protein resides in the mitochondrion inner membrane. It catalyses the reaction glutathione(in) = glutathione(out). The activity of SLC25A39 is regulated by levels of mitochondrial glutathione via its ability to bind [2Fe-2S] iron-sulfur cluster. Upon physiological levels of mitochondrial glutathione, glutathione prevents iron-sulfur-binding to SLC25A39 promoting cleavage and degradation by AFG3L2. Upon depletion of mitochondrial glutathione, SLC25A39 binds iron-sulfur, preventing cleavage and degradation by AFG3L2. Functionally, mitochondrial transporter required for glutathione import into mitochondria. Glutathione, which plays key roles in oxidative metabolism, is produced exclusively in the cytosol and is imported in many organelles. Mitochondrial glutathione is required for the activity and stability of proteins containing iron-sulfur clusters, as well as erythropoiesis. The polypeptide is Mitochondrial glutathione transporter SLC25A39 (Homo sapiens (Human)).